The chain runs to 444 residues: Vacuolar protein sorting-associated protein 4B (444 aa).

In terms of domain architecture, MIT spans 4–82 (TSPNLQKAID…KEYLKNKEKK (79 aa)). Residues 19–82 (AQEDKAGNYE…KEYLKNKEKK (64 aa)) are a coiled coil. Residues 78-88 (NKEKKAQKPVK) show a composition bias toward basic and acidic residues. The tract at residues 78 to 117 (NKEKKAQKPVKEGQPSPADEKGNDSDGEGESDDPEKKKLQ) is disordered. Residues Ser93, Ser102, and Ser108 each carry the phosphoserine modification. Residue 174-181 (GPPGTGKS) coordinates ATP. Ser410 is modified (phosphoserine).

Belongs to the AAA ATPase family. Proposed to be monomeric or homodimeric in nucleotide-free form and to oligomerize upon binding to ATP to form two stacked hexameric or heptameric rings with a central pore through which ESCRT-III substrates are translocated in an ATP-dependent manner. In vitro, associates on the inside of a helical tubular structure formed by a CHMP2A-CHMP3 polymer. Interacts with CHMP1A, CHMP1B, CHMP2A, CHMP4B and CHMP6. Interacts with VPS4A; the interaction suggests a heteromeric assembly with VPS4A. Interacts with VTA1.

The protein resides in the late endosome membrane. The catalysed reaction is ATP + H2O = ADP + phosphate + H(+). Involved in late steps of the endosomal multivesicular bodies (MVB) pathway. Recognizes membrane-associated ESCRT-III assemblies and catalyzes their disassembly, possibly in combination with membrane fission. Redistributes the ESCRT-III components to the cytoplasm for further rounds of MVB sorting. MVBs contain intraluminal vesicles (ILVs) that are generated by invagination and scission from the limiting membrane of the endosome and mostly are delivered to lysosomes enabling degradation of membrane proteins, such as stimulated growth factor receptors, lysosomal enzymes and lipids. VPS4A/B are required for the exosomal release of SDCBP, CD63 and syndecan. Functionally, (Microbial infection) In conjunction with the ESCRT machinery also appears to function in topologically equivalent membrane fission events, such as the terminal stages of cytokinesis and enveloped virus budding (lentiviruses). This Pongo abelii (Sumatran orangutan) protein is Vacuolar protein sorting-associated protein 4B (VPS4B).